The primary structure comprises 172 residues: RNA pyrophosphohydrolase (172 aa).

The 144-residue stretch at 6–149 folds into the Nudix hydrolase domain; it reads GYRPNVGIIL…KRDVYRMALK (144 aa). The Nudix box signature appears at 38–59; it reads GGIKYGESPEQAMYRELMEEVG.

This sequence belongs to the Nudix hydrolase family. RppH subfamily. A divalent metal cation is required as a cofactor.

Its function is as follows. Accelerates the degradation of transcripts by removing pyrophosphate from the 5'-end of triphosphorylated RNA, leading to a more labile monophosphorylated state that can stimulate subsequent ribonuclease cleavage. The sequence is that of RNA pyrophosphohydrolase from Methylobacillus flagellatus (strain ATCC 51484 / DSM 6875 / VKM B-1610 / KT).